The following is a 321-amino-acid chain: Acyl-CoA 5-desaturase AL21 (321 aa).

The next 2 helical transmembrane spans lie at 42 to 62 and 64 to 84; these read IFHI…PFTF and WSAF…GTTL. Fe cation-binding residues include histidine 87, histidine 92, histidine 124, histidine 127, and histidine 128. A Histidine box-1 motif is present at residues 87-92; sequence HRNLTH. The short motif at 124-128 is the Histidine box-2 element; the sequence is HRYHH. Residues 190–210 form a helical membrane-spanning segment; sequence LQAALLYMFGGFPFIVWGMAV. Histidine 227, histidine 256, histidine 259, and histidine 260 together coordinate Fe cation. The Histidine box-3 signature appears at 256 to 260; it reads HNNHH.

This sequence belongs to the fatty acid desaturase type 1 family. Fe(2+) serves as cofactor.

The protein resides in the membrane. It carries out the reaction (11Z,14Z)-eicosadienoyl-CoA + AH2 + O2 = (5Z,11Z,14Z)-eicosatrienoyl-CoA + A + 2 H2O. It catalyses the reaction (11Z,14Z,17Z)-eicosatrienoyl-CoA + AH2 + O2 = (5Z,11Z,14Z,17Z)-eicosatetraenoyl-CoA + A + 2 H2O. Its pathway is lipid metabolism; polyunsaturated fatty acid biosynthesis. Functionally, catalyzes the desaturation of 20:2Delta(11,14) and 20:3Delta(11,14,17) to generate sciadonic acid (20:3Delta(5,11,14)) and juniperonic acid (20:4Delta(5,11,14,17)). The enzyme can also use 16:0 and 18:0 as substrates. The sequence is that of Acyl-CoA 5-desaturase AL21 from Anemone leveillei (Windflower).